Reading from the N-terminus, the 342-residue chain is Serine/threonine-protein kinase ISR1 (342 aa).

In terms of domain architecture, Protein kinase spans 59-342; it reads WRLTRVLGCG…SNARVAEHAF (284 aa). ATP is bound by residues 65–73 and K84; that span reads LGCGSVACV. D190 functions as the Proton acceptor in the catalytic mechanism.

The protein belongs to the protein kinase superfamily. Ser/Thr protein kinase family.

It catalyses the reaction L-seryl-[protein] + ATP = O-phospho-L-seryl-[protein] + ADP + H(+). The catalysed reaction is L-threonyl-[protein] + ATP = O-phospho-L-threonyl-[protein] + ADP + H(+). In terms of biological role, probable serine/threonine protein kinase which may function redundantly with MPK1-independent branch of the PCK1 pathway. This is Serine/threonine-protein kinase ISR1 (ISR1) from Eremothecium gossypii (strain ATCC 10895 / CBS 109.51 / FGSC 9923 / NRRL Y-1056) (Yeast).